A 245-amino-acid polypeptide reads, in one-letter code: NLP effector protein Pc118551 (245 aa).

Positions 1–19 (MNLRAFLLSAVAALVAVQA) are cleaved as a signal peptide. The Hepta-peptide GHRHDWE motif signature appears at 121 to 127 (QRRHLWE). N-linked (GlcNAc...) asparagine glycosylation occurs at N140.

The protein belongs to the Necrosis inducing protein (NPP1) family.

It localises to the secreted. In terms of biological role, secreted effector that contributes strongly to virulence during infection by P.capsici. This Phytophthora capsici protein is NLP effector protein Pc118551.